The following is a 466-amino-acid chain: Asparagine--tRNA ligase (466 aa).

This sequence belongs to the class-II aminoacyl-tRNA synthetase family. Homodimer.

Its subcellular location is the cytoplasm. It carries out the reaction tRNA(Asn) + L-asparagine + ATP = L-asparaginyl-tRNA(Asn) + AMP + diphosphate + H(+). This chain is Asparagine--tRNA ligase, found in Colwellia psychrerythraea (strain 34H / ATCC BAA-681) (Vibrio psychroerythus).